Here is a 383-residue protein sequence, read N- to C-terminus: D-alanine--D-alanine ligase (383 aa).

An ATP-grasp domain is found at 169-373; that stretch reads KALLRAAGLP…YPQLVDRLVR (205 aa). 196-251 is a binding site for ATP; it reads QERLGLPVFVKPARGGSSIGISRVEAWADLDTAIKAARASDPKVLVESAIVGREIE. The Mg(2+) site is built by aspartate 327, glutamate 340, and asparagine 342.

This sequence belongs to the D-alanine--D-alanine ligase family. Mg(2+) is required as a cofactor. The cofactor is Mn(2+).

Its subcellular location is the cytoplasm. The enzyme catalyses 2 D-alanine + ATP = D-alanyl-D-alanine + ADP + phosphate + H(+). It functions in the pathway cell wall biogenesis; peptidoglycan biosynthesis. In terms of biological role, cell wall formation. The protein is D-alanine--D-alanine ligase of Frankia casuarinae (strain DSM 45818 / CECT 9043 / HFP020203 / CcI3).